Reading from the N-terminus, the 334-residue chain is WD repeat-containing protein 54 (334 aa).

WD repeat units follow at residues 162–206 (GHQM…TLLT), 208–247 (IPGF…LHVQ), and 250–289 (AHAR…ESGY).

In terms of assembly, homodimer and homotrimer; forms tight forms of dimers and trimers. Interacts with IZUMO1 and IZUMO1R/JUNO. Cross-linked to tightly form both dimers and trimers by TGM2. Cross-linking enhances the activation of EGF receptor-mediated signaling pathway. Cross-linking is inhibited by EGF. In terms of processing, ubiquitinated. EGF increases ubiquitination. In terms of tissue distribution, expressed in epithelial cells (at protein level). Isoform 3 expression is highly increased in colorectal cancer cells.

It is found in the vesicle. Its subcellular location is the cytoplasm. It localises to the cell membrane. Plays a role in the adhesion and fusion of the sperm-oocyte membrane through its interactions with IZUMO1 and IZUMO1R/JUNO. When cross-linked to form dimers and trimers, it has a regulatory effect on ERK signaling pathway activity in response to EGF stimulation. Colocalizes with the EGF receptor in WDR54-specific vesicle where it sustains the internalization and controls the degradation of the EGF receptor after EGF stimulation. This is WD repeat-containing protein 54 from Homo sapiens (Human).